Consider the following 90-residue polypeptide: DNA-directed RNA polymerase subunit Rpo5 (90 aa).

The protein belongs to the archaeal Rpo5/eukaryotic RPB5 RNA polymerase subunit family. As to quaternary structure, part of the RNA polymerase complex.

It is found in the cytoplasm. The catalysed reaction is RNA(n) + a ribonucleoside 5'-triphosphate = RNA(n+1) + diphosphate. In terms of biological role, DNA-dependent RNA polymerase (RNAP) catalyzes the transcription of DNA into RNA using the four ribonucleoside triphosphates as substrates. This chain is DNA-directed RNA polymerase subunit Rpo5, found in Aeropyrum pernix (strain ATCC 700893 / DSM 11879 / JCM 9820 / NBRC 100138 / K1).